The chain runs to 465 residues: UDP-N-acetylmuramate--L-alanine ligase (465 aa).

An ATP-binding site is contributed by 115-121; it reads GAHGKTT.

This sequence belongs to the MurCDEF family.

The protein localises to the cytoplasm. The enzyme catalyses UDP-N-acetyl-alpha-D-muramate + L-alanine + ATP = UDP-N-acetyl-alpha-D-muramoyl-L-alanine + ADP + phosphate + H(+). It functions in the pathway cell wall biogenesis; peptidoglycan biosynthesis. Functionally, cell wall formation. This chain is UDP-N-acetylmuramate--L-alanine ligase, found in Coxiella burnetii (strain CbuK_Q154) (Coxiella burnetii (strain Q154)).